Here is a 660-residue protein sequence, read N- to C-terminus: Probable beta-hexosaminidase fdl (660 aa).

The signal sequence occupies residues 1 to 36; it reads MSLAVSLRRALLVLLTGAIFILTVLYWNQGVTKAQA. Residues Asn210, Asn412, and Asn452 are each glycosylated (N-linked (GlcNAc...) asparagine).

This sequence belongs to the glycosyl hydrolase 20 family. As to expression, in third instar larval and early pupal brains, expressed in cells sending projections across the interhemispheric junction. In adult brain, expressed in mushroom body, ellipsoid body and pars intercerebralis.

The enzyme catalyses Hydrolysis of terminal non-reducing N-acetyl-D-hexosamine residues in N-acetyl-beta-D-hexosaminides.. Involved in brain restructurization via hormonal control during metamorphosis. Implicated in N-glycan processing. The polypeptide is Probable beta-hexosaminidase fdl (fdl) (Drosophila melanogaster (Fruit fly)).